The following is a 102-amino-acid chain: Plastocyanin (102 aa).

The region spanning Ala-1–Lys-102 is the Plastocyanin-like domain. 4 residues coordinate Cu cation: His-37, Cys-87, His-90, and Met-95.

Belongs to the plastocyanin family. Cu(2+) serves as cofactor.

The protein resides in the plastid. It is found in the chloroplast thylakoid membrane. Participates in electron transfer between P700 and the cytochrome b6-f complex in photosystem I. The sequence is that of Plastocyanin (PETE) from Dryopteris crassirhizoma (Thick stemmed wood fern).